Consider the following 328-residue polypeptide: D-cysteine desulfhydrase (328 aa).

Lysine 51 is modified (N6-(pyridoxal phosphate)lysine).

It belongs to the ACC deaminase/D-cysteine desulfhydrase family. As to quaternary structure, homodimer. The cofactor is pyridoxal 5'-phosphate.

It carries out the reaction D-cysteine + H2O = hydrogen sulfide + pyruvate + NH4(+) + H(+). Functionally, catalyzes the alpha,beta-elimination reaction of D-cysteine and of several D-cysteine derivatives. It could be a defense mechanism against D-cysteine. The protein is D-cysteine desulfhydrase of Salmonella agona (strain SL483).